The chain runs to 429 residues: Histidine--tRNA ligase (429 aa).

Belongs to the class-II aminoacyl-tRNA synthetase family. As to quaternary structure, homodimer.

Its subcellular location is the cytoplasm. It catalyses the reaction tRNA(His) + L-histidine + ATP = L-histidyl-tRNA(His) + AMP + diphosphate + H(+). This chain is Histidine--tRNA ligase, found in Pseudomonas aeruginosa (strain UCBPP-PA14).